The primary structure comprises 639 residues: UvrABC system protein C (639 aa).

Positions 20–97 (ERSGVYRMFD…IKKFQPKFNI (78 aa)) constitute a GIY-YIG domain. Positions 207–242 (KELQENLSRKMEELSSQMRFEEAAEIRDRIKALSYV) constitute a UVR domain.

Belongs to the UvrC family. As to quaternary structure, interacts with UvrB in an incision complex.

It localises to the cytoplasm. Its function is as follows. The UvrABC repair system catalyzes the recognition and processing of DNA lesions. UvrC both incises the 5' and 3' sides of the lesion. The N-terminal half is responsible for the 3' incision and the C-terminal half is responsible for the 5' incision. This is UvrABC system protein C from Rickettsia rickettsii (strain Iowa).